The chain runs to 79 residues: Small ribosomal subunit protein uS11 (79 aa).

Ser-14 bears the Phosphoserine mark. Glycyl lysine isopeptide (Lys-Gly) (interchain with G-Cter in SUMO2) cross-links involve residues Lys-59 and Lys-61.

This sequence belongs to the universal ribosomal protein uS11 family. Component of the small ribosomal subunit. Part of the small subunit (SSU) processome, composed of more than 70 proteins and the RNA chaperone small nucleolar RNA (snoRNA) U3.

The protein resides in the cytoplasm. Its subcellular location is the nucleus. The protein localises to the nucleolus. Its function is as follows. Component of the small ribosomal subunit. The ribosome is a large ribonucleoprotein complex responsible for the synthesis of proteins in the cell. Part of the small subunit (SSU) processome, first precursor of the small eukaryotic ribosomal subunit. During the assembly of the SSU processome in the nucleolus, many ribosome biogenesis factors, an RNA chaperone and ribosomal proteins associate with the nascent pre-rRNA and work in concert to generate RNA folding, modifications, rearrangements and cleavage as well as targeted degradation of pre-ribosomal RNA by the RNA exosome. The polypeptide is Small ribosomal subunit protein uS11 (RPS14) (Sus scrofa (Pig)).